We begin with the raw amino-acid sequence, 335 residues long: Methionine import ATP-binding protein MetN 1 (335 aa).

Residues 2–242 enclose the ABC transporter domain; the sequence is IEFHNVHKTY…PQHPTTRRFV (241 aa). 38–45 contributes to the ATP binding site; that stretch reads GHSGAGKS.

Belongs to the ABC transporter superfamily. Methionine importer (TC 3.A.1.24) family. As to quaternary structure, the complex is composed of two ATP-binding proteins (MetN), two transmembrane proteins (MetI) and a solute-binding protein (MetQ).

It is found in the cell inner membrane. The enzyme catalyses L-methionine(out) + ATP + H2O = L-methionine(in) + ADP + phosphate + H(+). It catalyses the reaction D-methionine(out) + ATP + H2O = D-methionine(in) + ADP + phosphate + H(+). Functionally, part of the ABC transporter complex MetNIQ involved in methionine import. Responsible for energy coupling to the transport system. The chain is Methionine import ATP-binding protein MetN 1 from Pseudomonas savastanoi pv. phaseolicola (strain 1448A / Race 6) (Pseudomonas syringae pv. phaseolicola (strain 1448A / Race 6)).